Consider the following 229-residue polypeptide: Putative N-acetylmannosamine-6-phosphate 2-epimerase 2 (229 aa).

Belongs to the NanE family.

It carries out the reaction an N-acyl-D-glucosamine 6-phosphate = an N-acyl-D-mannosamine 6-phosphate. It participates in amino-sugar metabolism; N-acetylneuraminate degradation; D-fructose 6-phosphate from N-acetylneuraminate: step 3/5. Converts N-acetylmannosamine-6-phosphate (ManNAc-6-P) to N-acetylglucosamine-6-phosphate (GlcNAc-6-P). The chain is Putative N-acetylmannosamine-6-phosphate 2-epimerase 2 from Salmonella paratyphi A (strain ATCC 9150 / SARB42).